The following is a 451-amino-acid chain: 3-phosphoshikimate 1-carboxyvinyltransferase (451 aa).

Residues Lys-38, Ser-39, and Arg-43 each contribute to the 3-phosphoshikimate site. Lys-38 contacts phosphoenolpyruvate. The phosphoenolpyruvate site is built by Gly-111 and Arg-140. 4 residues coordinate 3-phosphoshikimate: Ser-185, Gln-187, Asp-335, and Lys-362. Residue Gln-187 participates in phosphoenolpyruvate binding. Asp-335 acts as the Proton acceptor in catalysis. 2 residues coordinate phosphoenolpyruvate: Arg-366 and Arg-408.

The protein belongs to the EPSP synthase family. Monomer.

The protein resides in the cytoplasm. The enzyme catalyses 3-phosphoshikimate + phosphoenolpyruvate = 5-O-(1-carboxyvinyl)-3-phosphoshikimate + phosphate. Its pathway is metabolic intermediate biosynthesis; chorismate biosynthesis; chorismate from D-erythrose 4-phosphate and phosphoenolpyruvate: step 6/7. Functionally, catalyzes the transfer of the enolpyruvyl moiety of phosphoenolpyruvate (PEP) to the 5-hydroxyl of shikimate-3-phosphate (S3P) to produce enolpyruvyl shikimate-3-phosphate and inorganic phosphate. In Crocosphaera subtropica (strain ATCC 51142 / BH68) (Cyanothece sp. (strain ATCC 51142)), this protein is 3-phosphoshikimate 1-carboxyvinyltransferase.